The following is a 170-amino-acid chain: Peptide deformylase (170 aa).

The Fe cation site is built by Cys92 and His134. Glu135 is a catalytic residue. His138 contacts Fe cation.

The protein belongs to the polypeptide deformylase family. The cofactor is Fe(2+).

It catalyses the reaction N-terminal N-formyl-L-methionyl-[peptide] + H2O = N-terminal L-methionyl-[peptide] + formate. Functionally, removes the formyl group from the N-terminal Met of newly synthesized proteins. Requires at least a dipeptide for an efficient rate of reaction. N-terminal L-methionine is a prerequisite for activity but the enzyme has broad specificity at other positions. This Chromohalobacter salexigens (strain ATCC BAA-138 / DSM 3043 / CIP 106854 / NCIMB 13768 / 1H11) protein is Peptide deformylase.